Consider the following 617-residue polypeptide: Neopullulanase SusA (617 aa).

The signal sequence occupies residues 1 to 22; that stretch reads MKRNLLFIILLLLLPGLHQVFA. Residues asparagine 138, asparagine 143, aspartate 144, glycine 164, and aspartate 166 each contribute to the Ca(2+) site. Residues aspartate 331 and glutamate 360 contribute to the active site.

It belongs to the glycosyl hydrolase 13 family. The cofactor is Ca(2+).

It localises to the periplasm. It catalyses the reaction Hydrolysis of pullulan to panose (6-alpha-D-glucosylmaltose).. Its pathway is glycan degradation; starch degradation. Neopullulanase that cleaves 1,4-alpha-glucosidic linkages in starch to produce disaccharides or trisaccharides in starch degradation. This Bacteroides thetaiotaomicron (strain ATCC 29148 / DSM 2079 / JCM 5827 / CCUG 10774 / NCTC 10582 / VPI-5482 / E50) protein is Neopullulanase SusA (susA).